A 156-amino-acid chain; its full sequence is 6,7-dimethyl-8-ribityllumazine synthase (156 aa).

Residues Phe-24, 58 to 60 (AFE), and 82 to 84 (VII) each bind 5-amino-6-(D-ribitylamino)uracil. Position 87–88 (87–88 (ST)) interacts with (2S)-2-hydroxy-3-oxobutyl phosphate. His-90 acts as the Proton donor in catalysis. Phe-115 provides a ligand contact to 5-amino-6-(D-ribitylamino)uracil. Arg-129 contributes to the (2S)-2-hydroxy-3-oxobutyl phosphate binding site.

It belongs to the DMRL synthase family.

The catalysed reaction is (2S)-2-hydroxy-3-oxobutyl phosphate + 5-amino-6-(D-ribitylamino)uracil = 6,7-dimethyl-8-(1-D-ribityl)lumazine + phosphate + 2 H2O + H(+). It participates in cofactor biosynthesis; riboflavin biosynthesis; riboflavin from 2-hydroxy-3-oxobutyl phosphate and 5-amino-6-(D-ribitylamino)uracil: step 1/2. Functionally, catalyzes the formation of 6,7-dimethyl-8-ribityllumazine by condensation of 5-amino-6-(D-ribitylamino)uracil with 3,4-dihydroxy-2-butanone 4-phosphate. This is the penultimate step in the biosynthesis of riboflavin. The chain is 6,7-dimethyl-8-ribityllumazine synthase from Chlorobaculum parvum (strain DSM 263 / NCIMB 8327) (Chlorobium vibrioforme subsp. thiosulfatophilum).